Reading from the N-terminus, the 306-residue chain is ORF-B protein (306 aa).

3 helical membrane-spanning segments follow: residues 92 to 112, 120 to 140, and 161 to 181; these read MIQW…FPFI, LTHL…VFGW, and VIEW…IVVS.

As to quaternary structure, interacts with host RACK1.

The protein resides in the host cytoplasm. The protein localises to the host cell membrane. The polypeptide is ORF-B protein (Sander vitreus (Walleye)).